Here is a 249-residue protein sequence, read N- to C-terminus: Uridylate kinase (249 aa).

23-26 (KISG) lines the ATP pocket. The tract at residues 31-36 (GDQGFG) is involved in allosteric activation by GTP. Residue glycine 65 participates in UMP binding. ATP is bound by residues glycine 66 and arginine 70. Residues aspartate 85 and 146–153 (TGNPYFTT) contribute to the UMP site. ATP-binding residues include threonine 173, tyrosine 179, and aspartate 182.

It belongs to the UMP kinase family. As to quaternary structure, homohexamer.

It localises to the cytoplasm. It carries out the reaction UMP + ATP = UDP + ADP. It functions in the pathway pyrimidine metabolism; CTP biosynthesis via de novo pathway; UDP from UMP (UMPK route): step 1/1. With respect to regulation, allosterically activated by GTP. Inhibited by UTP. Catalyzes the reversible phosphorylation of UMP to UDP. The sequence is that of Uridylate kinase from Jannaschia sp. (strain CCS1).